We begin with the raw amino-acid sequence, 172 residues long: 3-hydroxydecanoyl-[acyl-carrier-protein] dehydratase (172 aa).

Residue H71 is part of the active site.

This sequence belongs to the thioester dehydratase family. FabA subfamily. As to quaternary structure, homodimer.

It localises to the cytoplasm. The catalysed reaction is a (3R)-hydroxyacyl-[ACP] = a (2E)-enoyl-[ACP] + H2O. It catalyses the reaction (3R)-hydroxydecanoyl-[ACP] = (2E)-decenoyl-[ACP] + H2O. The enzyme catalyses (2E)-decenoyl-[ACP] = (3Z)-decenoyl-[ACP]. It participates in lipid metabolism; fatty acid biosynthesis. In terms of biological role, necessary for the introduction of cis unsaturation into fatty acids. Catalyzes the dehydration of (3R)-3-hydroxydecanoyl-ACP to E-(2)-decenoyl-ACP and then its isomerization to Z-(3)-decenoyl-ACP. Can catalyze the dehydratase reaction for beta-hydroxyacyl-ACPs with saturated chain lengths up to 16:0, being most active on intermediate chain length. This chain is 3-hydroxydecanoyl-[acyl-carrier-protein] dehydratase, found in Proteus mirabilis (strain HI4320).